Reading from the N-terminus, the 389-residue chain is tRNA (guanine-N(7)-)-methyltransferase non-catalytic subunit TRM82 (389 aa).

3 WD repeats span residues 44–86, 134–179, and 184–222; these read QNVP…HQLK, GHTS…KGFL, and QFVS…LITE.

The protein belongs to the WD repeat TRM82 family. In terms of assembly, forms a heterodimer with the catalytic subunit TRM8.

It is found in the nucleus. It participates in tRNA modification; N(7)-methylguanine-tRNA biosynthesis. In terms of biological role, required for the formation of N(7)-methylguanine at position 46 (m7G46) in tRNA. In the complex, it is required to stabilize and induce conformational changes of the catalytic subunit. The protein is tRNA (guanine-N(7)-)-methyltransferase non-catalytic subunit TRM82 of Lodderomyces elongisporus (strain ATCC 11503 / CBS 2605 / JCM 1781 / NBRC 1676 / NRRL YB-4239) (Yeast).